Consider the following 512-residue polypeptide: Maturase K (512 aa).

Belongs to the intron maturase 2 family. MatK subfamily.

It is found in the plastid. The protein resides in the chloroplast. Functionally, usually encoded in the trnK tRNA gene intron. Probably assists in splicing its own and other chloroplast group II introns. In Lilium canadense (Canada lily), this protein is Maturase K.